A 150-amino-acid chain; its full sequence is Large ribosomal subunit protein bL9 (150 aa).

The protein belongs to the bacterial ribosomal protein bL9 family.

In terms of biological role, binds to the 23S rRNA. The protein is Large ribosomal subunit protein bL9 of Neisseria gonorrhoeae (strain ATCC 700825 / FA 1090).